The following is a 331-amino-acid chain: Cysteine and histidine-rich domain-containing protein 1 (331 aa).

Position 2 is an N-acetylalanine (A2). The interaction with PPP5C stretch occupies residues 2–77 (ALLCYNRGCG…KPPEPVKPEV (76 aa)). Residues C5, C10, C24, H27, C42, and C43 each contribute to the Zn(2+) site. CHORD domains lie at 5–64 (CYNR…KGRH) and 157–216 (CKNG…RGKH). Position 47 is a phosphothreonine (T47). Residue S51 is modified to Phosphoserine. C59, H64, C157, C162, C176, H179, C194, C195, C211, and H216 together coordinate Zn(2+). A disordered region spans residues 62 to 82 (GRHNSEKPPEPVKPEVKTTEK). Residues 64–82 (HNSEKPPEPVKPEVKTTEK) are compositionally biased toward basic and acidic residues. Residues 65–316 (NSEKPPEPVK…AEPMQWASLE (252 aa)) form an interaction with HSP90AA1 and HSP90AB1 region. The CS domain occupies 227–316 (VVPCRHDWHQ…AEPMQWASLE (90 aa)).

Interacts with HSP90AA1, HSP90AB1, PPP5C, ROCK1 and ROCK2.

Regulates centrosome duplication, probably by inhibiting the kinase activity of ROCK2. Proposed to act as co-chaperone for HSP90. May play a role in the regulation of NOD1 via a HSP90 chaperone complex. In vitro, has intrinsic chaperone activity. This function may be achieved by inhibiting association of ROCK2 with NPM1. Plays a role in ensuring the localization of the tyrosine kinase receptor EGFR to the plasma membrane, and thus ensures the subsequent regulation of EGFR activity and EGF-induced actin cytoskeleton remodeling. Involved in stress response. Prevents tumorigenesis. The polypeptide is Cysteine and histidine-rich domain-containing protein 1 (Chordc1) (Rattus norvegicus (Rat)).